Consider the following 184-residue polypeptide: GMP synthase [glutamine-hydrolyzing] subunit A (184 aa).

One can recognise a Glutamine amidotransferase type-1 domain in the interval 3–184; sequence PLYVVNNHGQ…FENFDGICSE (182 aa). The active-site Nucleophile is the C75. Residues H162 and E164 contribute to the active site.

As to quaternary structure, heterodimer composed of a glutamine amidotransferase subunit (A) and a GMP-binding subunit (B).

The enzyme catalyses XMP + L-glutamine + ATP + H2O = GMP + L-glutamate + AMP + diphosphate + 2 H(+). The protein operates within purine metabolism; GMP biosynthesis; GMP from XMP (L-Gln route): step 1/1. Functionally, catalyzes the synthesis of GMP from XMP. This Methanoculleus marisnigri (strain ATCC 35101 / DSM 1498 / JR1) protein is GMP synthase [glutamine-hydrolyzing] subunit A.